A 334-amino-acid chain; its full sequence is Anthranilate phosphoribosyltransferase (334 aa).

5-phospho-alpha-D-ribose 1-diphosphate contacts are provided by residues Gly-79, 82-83 (GD), Ser-87, 89-92 (NIST), 107-115 (KHGNRSISS), and Ser-119. Gly-79 is a binding site for anthranilate. Residue Ser-91 participates in Mg(2+) binding. Asn-110 lines the anthranilate pocket. Arg-165 is a binding site for anthranilate. Asp-224 and Glu-225 together coordinate Mg(2+).

Belongs to the anthranilate phosphoribosyltransferase family. In terms of assembly, homodimer. Mg(2+) is required as a cofactor.

The catalysed reaction is N-(5-phospho-beta-D-ribosyl)anthranilate + diphosphate = 5-phospho-alpha-D-ribose 1-diphosphate + anthranilate. It functions in the pathway amino-acid biosynthesis; L-tryptophan biosynthesis; L-tryptophan from chorismate: step 2/5. Catalyzes the transfer of the phosphoribosyl group of 5-phosphorylribose-1-pyrophosphate (PRPP) to anthranilate to yield N-(5'-phosphoribosyl)-anthranilate (PRA). This is Anthranilate phosphoribosyltransferase from Streptococcus pneumoniae serotype 19F (strain G54).